The primary structure comprises 123 residues: WAP four-disulfide core domain protein 5 (123 aa).

The N-terminal stretch at 1 to 24 (MRIQSLLLLGALLAVGSQPPAAFG) is a signal peptide. WAP domains follow at residues 27–73 (KGEK…CVPR) and 74–121 (VSVK…RDPV). Cystine bridges form between C34–C62, C41–C66, C49–C61, C55–C70, C81–C109, C88–C113, C96–C108, and C102–C117.

Its subcellular location is the secreted. Functionally, putative acid-stable proteinase inhibitor. The protein is WAP four-disulfide core domain protein 5 (WFDC5) of Aotus nancymaae (Ma's night monkey).